A 303-amino-acid polypeptide reads, in one-letter code: Agmatinase (303 aa).

Residues histidine 126, aspartate 149, histidine 151, aspartate 153, aspartate 230, and aspartate 232 each coordinate Mn(2+).

The protein belongs to the arginase family. Agmatinase subfamily. The cofactor is Mn(2+).

It catalyses the reaction agmatine + H2O = urea + putrescine. Functionally, catalyzes the formation of putrescine from agmatine. This chain is Agmatinase (speB), found in Blochmanniella floridana.